The following is a 216-amino-acid chain: Probable transaldolase (216 aa).

Residue lysine 83 is the Schiff-base intermediate with substrate of the active site.

The protein belongs to the transaldolase family. Type 3B subfamily.

The protein localises to the cytoplasm. The catalysed reaction is D-sedoheptulose 7-phosphate + D-glyceraldehyde 3-phosphate = D-erythrose 4-phosphate + beta-D-fructose 6-phosphate. It participates in carbohydrate degradation; pentose phosphate pathway; D-glyceraldehyde 3-phosphate and beta-D-fructose 6-phosphate from D-ribose 5-phosphate and D-xylulose 5-phosphate (non-oxidative stage): step 2/3. Transaldolase is important for the balance of metabolites in the pentose-phosphate pathway. This is Probable transaldolase from Thermosipho africanus (strain TCF52B).